The sequence spans 96 residues: Small ribosomal subunit protein bS6 (96 aa).

Belongs to the bacterial ribosomal protein bS6 family.

Its function is as follows. Binds together with bS18 to 16S ribosomal RNA. The chain is Small ribosomal subunit protein bS6 from Acidothermus cellulolyticus (strain ATCC 43068 / DSM 8971 / 11B).